Consider the following 30-residue polypeptide: Cycloviolacin-O18 (30 aa).

The cyclopeptide (Gly-Asn) cross-link spans G1–N30. Intrachain disulfides connect C4–C21, C8–C23, and C13–C28.

This is a cyclic peptide. Expressed in leaves, petals and petioles but not in roots and runners (at protein level).

Probably participates in a plant defense mechanism. This is Cycloviolacin-O18 from Viola odorata (Sweet violet).